We begin with the raw amino-acid sequence, 630 residues long: Triacylglycerol lipase ptl2 (630 aa).

The PNPLA domain occupies 251–442 (LCLSGGASFA…RTDIPLSELR (192 aa)). The GXSXG signature appears at 282–286 (GTSGG). S284 serves as the catalytic Nucleophile. Residue D429 is the Proton acceptor of the active site.

Belongs to the PLPL family.

Its subcellular location is the lipid droplet. It catalyses the reaction a triacylglycerol + H2O = a diacylglycerol + a fatty acid + H(+). Lipid particle-localized triacylglycerol (TAG) lipase. The lipid droplet/particle is a lipid storage compartment which serves as a depot of energy and building blocks for membrane lipid biosynthesis. Involved in the mobilization of the non-polar storage lipids triacylglycerols (TAGs) from lipid particles by hydrolysis of TAGs, releasing and supplying specific fatty acids to the appropriate metabolic pathways. In Schizosaccharomyces pombe (strain 972 / ATCC 24843) (Fission yeast), this protein is Triacylglycerol lipase ptl2 (ptl2).